The chain runs to 337 residues: 4-hydroxy-3-methylbut-2-enyl diphosphate reductase (337 aa).

Cys-25 lines the [4Fe-4S] cluster pocket. Residues His-54 and His-87 each contribute to the (2E)-4-hydroxy-3-methylbut-2-enyl diphosphate site. 2 residues coordinate dimethylallyl diphosphate: His-54 and His-87. His-54 and His-87 together coordinate isopentenyl diphosphate. Position 109 (Cys-109) interacts with [4Fe-4S] cluster. His-137 lines the (2E)-4-hydroxy-3-methylbut-2-enyl diphosphate pocket. Position 137 (His-137) interacts with dimethylallyl diphosphate. His-137 serves as a coordination point for isopentenyl diphosphate. Catalysis depends on Glu-139, which acts as the Proton donor. Thr-177 serves as a coordination point for (2E)-4-hydroxy-3-methylbut-2-enyl diphosphate. Cys-207 contributes to the [4Fe-4S] cluster binding site. The (2E)-4-hydroxy-3-methylbut-2-enyl diphosphate site is built by Ser-235, Ser-236, Asn-237, and Ser-280. The dimethylallyl diphosphate site is built by Ser-235, Ser-236, Asn-237, and Ser-280. The isopentenyl diphosphate site is built by Ser-235, Ser-236, Asn-237, and Ser-280.

This sequence belongs to the IspH family. [4Fe-4S] cluster serves as cofactor.

The catalysed reaction is isopentenyl diphosphate + 2 oxidized [2Fe-2S]-[ferredoxin] + H2O = (2E)-4-hydroxy-3-methylbut-2-enyl diphosphate + 2 reduced [2Fe-2S]-[ferredoxin] + 2 H(+). It carries out the reaction dimethylallyl diphosphate + 2 oxidized [2Fe-2S]-[ferredoxin] + H2O = (2E)-4-hydroxy-3-methylbut-2-enyl diphosphate + 2 reduced [2Fe-2S]-[ferredoxin] + 2 H(+). It functions in the pathway isoprenoid biosynthesis; dimethylallyl diphosphate biosynthesis; dimethylallyl diphosphate from (2E)-4-hydroxy-3-methylbutenyl diphosphate: step 1/1. The protein operates within isoprenoid biosynthesis; isopentenyl diphosphate biosynthesis via DXP pathway; isopentenyl diphosphate from 1-deoxy-D-xylulose 5-phosphate: step 6/6. Catalyzes the conversion of 1-hydroxy-2-methyl-2-(E)-butenyl 4-diphosphate (HMBPP) into a mixture of isopentenyl diphosphate (IPP) and dimethylallyl diphosphate (DMAPP). Acts in the terminal step of the DOXP/MEP pathway for isoprenoid precursor biosynthesis. This chain is 4-hydroxy-3-methylbut-2-enyl diphosphate reductase, found in Leifsonia xyli subsp. xyli (strain CTCB07).